Reading from the N-terminus, the 666-residue chain is MGQTKSKIKSKYASYLSFIKILLKRGGVKVSTKNLIKLFQIIEQFCPWFPEQGTLDLKDWKRIGKELKQAGRKGNIIPLTVWNDWAIIKAALEPFQTEEDSVSVSDAPGSCLIDCNEKTRKKSQKETESLHCEYVAEPVMAQSTQNVDYNQLQEVIYPETLKLEGKGPELVGPSESKPRGTSPLPAGQVPVTLQPQKQVKENKTQPPVAYQYWPPAELQYRPPPESQYGYPGMPPAPQGRAPYPQPPTRRLNPTAPPSRQGSELHEIIDKSRKEGDTEAWQFPVTLEPMPPGEGAQEGEPPTVEARYKSFSIKMLKDMKEGVKQYGPNSPYMRTLLDSIAYGHRLIPYDWEILAKSSLSPSQFLQFKTWWIDGVQEQVRRNRAANPPVNIDADQLLGIGQNWSTISQQALMQNEAIEQVRAICLRAWEKIQDPGSACPSFNTVRQGSKEPYPDFVARLQDVAQKSIADEKARKVIVELMAYENANPECQSAIKPLKGKVPAGSDVISEYVKACDGIGGAMHKAMLMAQAITGVVLGGQVRTFGGKCYNCGQIGHLKKNCPVLNKQNITIQATTTGREPPDLCPRCKKGKHWASQCRSKFDKNGQPLSGNEQRGQPQAPQQTGAFPIQPFVPQGFQGQQPPLSQVFQGISQLPQYNNCPLPQAAVQQ.

G2 carries the N-myristoyl glycine lipid modification. A disordered region spans residues 165 to 264 (GKGPELVGPS…APPSRQGSEL (100 aa)). The span at 232–247 (GMPPAPQGRAPYPQPP) shows a compositional bias: pro residues. CCHC-type zinc fingers lie at residues 544 to 561 (GKCYNCGQIGHLKKNCPV) and 580 to 597 (DLCPRCKKGKHWASQCRS). The interval 598–641 (KFDKNGQPLSGNEQRGQPQAPQQTGAFPIQPFVPQGFQGQQPPL) is disordered. Positions 604 to 622 (QPLSGNEQRGQPQAPQQTG) are enriched in polar residues. Low complexity predominate over residues 624–640 (FPIQPFVPQGFQGQQPP).

Belongs to the beta type-B retroviral Gag protein family. HERV class-II K(HML-2) gag subfamily. In terms of processing, myristoylation is essential for retroviral assembly. Alteration of the glycine residue leads to a block in the budding of particles and an accumulation of Gag inside the cell. Post-translationally, specific enzymatic cleavages may yield mature proteins.

The protein localises to the cell membrane. Its function is as follows. The products of the Gag polyproteins of infectious retroviruses perform highly complex orchestrated tasks during the assembly, budding, maturation, and infection stages of the viral replication cycle. During viral assembly, the proteins form membrane associations and self-associations that ultimately result in budding of an immature virion from the infected cell. Gag precursors also function during viral assembly to selectively bind and package two plus strands of genomic RNA. Endogenous Gag proteins may have kept, lost or modified their original function during evolution. This is Endogenous retrovirus group K member 24 Gag polyprotein (ERVK-24) from Homo sapiens (Human).